The chain runs to 493 residues: Cytochrome P450 2W1 (493 aa).

A signal peptide spans 1-23 (MALLLLGVWGILLLLGLWGLLQG). N-linked (GlcNAc...) asparagine glycosylation occurs at N180. C436 is a binding site for heme.

Belongs to the cytochrome P450 family. Heme is required as a cofactor. In terms of tissue distribution, detected in colon, ileum, and testes.

It localises to the endoplasmic reticulum lumen. It is found in the cell membrane. The protein localises to the microsome membrane. It catalyses the reaction all-trans-retinoate + reduced [NADPH--hemoprotein reductase] + O2 = all-trans-4-hydroxyretinoate + oxidized [NADPH--hemoprotein reductase] + H2O + H(+). The catalysed reaction is 1-(9Z-octadecenoyl)-sn-glycero-3-phosphocholine + reduced [NADPH--hemoprotein reductase] + O2 = 1-[8-hydroxy-(9Z)-octadecenoyl]-sn-glycero-3-phosphocholine + oxidized [NADPH--hemoprotein reductase] + H2O + H(+). The enzyme catalyses 1-(9Z-octadecenoyl)-sn-glycero-3-phosphocholine + reduced [NADPH--hemoprotein reductase] + O2 = 1-[11-hydroxy-(9Z)-octadecenoyl]-sn-glycero-3-phosphocholine + oxidized [NADPH--hemoprotein reductase] + H2O + H(+). It carries out the reaction 1-(9Z-octadecenoyl)-sn-glycero-3-phosphocholine + reduced [NADPH--hemoprotein reductase] + O2 = 1-[(9S,10R)-epoxy-octadecanoyl]-sn-glycero-3-phosphocholine + oxidized [NADPH--hemoprotein reductase] + H2O + H(+). It catalyses the reaction 1-(9Z-octadecenoyl)-sn-glycero-3-phosphocholine + reduced [NADPH--hemoprotein reductase] + O2 = 1-[(9R,10S)-epoxy-octadecanoyl]-sn-glycero-3-phosphocholine + oxidized [NADPH--hemoprotein reductase] + H2O + H(+). Functionally, a cytochrome P450 monooxygenase that may play a role in retinoid and phospholipid metabolism. Catalyzes the hydroxylation of saturated carbon hydrogen bonds. Hydroxylates all trans-retinoic acid (atRA) to 4-hydroxyretinoate and may regulate atRA clearance. Other retinoids such as all-trans retinol and all-trans retinal are potential endogenous substrates. Catalyzes both epoxidation of double bonds and hydroxylation of carbon hydrogen bonds of the fatty acyl chain of 1-acylphospholipids/2-lysophospholipids. Can metabolize various lysophospholipids classes including lysophosphatidylcholines (LPCs), lysophosphatidylinositols (LPIs), lysophosphatidylserines (LPSs), lysophosphatidylglycerols (LPGs), lysophosphatidylethanolamines (LPEs) and lysophosphatidic acids (LPAs). Has low or no activity toward 2-acylphospholipids/1-lysophospholipids, diacylphospholipids and free fatty acids. May play a role in tumorigenesis by activating procarcinogens such as aflatoxin B1, polycyclic aromatic hydrocarbon dihydrodiols and aromatic amines. Mechanistically, uses molecular oxygen inserting one oxygen atom into a substrate, and reducing the second into a water molecule, with two electrons provided by NADPH via cytochrome P450 reductase (CPR; NADPH-ferrihemoprotein reductase). This chain is Cytochrome P450 2W1 (Cyp2w1), found in Mus musculus (Mouse).